The sequence spans 393 residues: Pre-mRNA-splicing regulator WTAP (393 aa).

Residues glutamine 240–leucine 393 form a disordered region. Residues glutamate 254–glycine 267 show a composition bias toward basic and acidic residues. Residues glycine 272 to serine 286 show a composition bias toward polar residues. The segment covering leucine 310–serine 319 has biased composition (basic and acidic residues). The span at arginine 320–threonine 353 shows a compositional bias: polar residues. Over residues aspartate 354–valine 365 the composition is skewed to basic and acidic residues. Positions glycine 369 to leucine 393 are enriched in polar residues.

Belongs to the fl(2)d family. In terms of assembly, component of the WMM complex, a N6-methyltransferase complex composed of a catalytic subcomplex, named MAC, and of an associated subcomplex, named MACOM. Component of the MACOM subcomplex.

It localises to the nucleus speckle. It is found in the nucleus. The protein resides in the nucleoplasm. Its function is as follows. Associated component of the WMM complex, a complex that mediates N6-methyladenosine (m6A) methylation of RNAs, a modification that plays a role in the efficiency of mRNA splicing and RNA processing. In Xenopus tropicalis (Western clawed frog), this protein is Pre-mRNA-splicing regulator WTAP.